Here is a 123-residue protein sequence, read N- to C-terminus: Small ribosomal subunit protein uS12 (123 aa).

The disordered stretch occupies residues 1–29; the sequence is MPTINQLVRKGREPQKAKSKVPAMEQNPQ. 3-methylthioaspartic acid is present on aspartate 89.

This sequence belongs to the universal ribosomal protein uS12 family. Part of the 30S ribosomal subunit. Contacts proteins S8 and S17. May interact with IF1 in the 30S initiation complex.

With S4 and S5 plays an important role in translational accuracy. In terms of biological role, interacts with and stabilizes bases of the 16S rRNA that are involved in tRNA selection in the A site and with the mRNA backbone. Located at the interface of the 30S and 50S subunits, it traverses the body of the 30S subunit contacting proteins on the other side and probably holding the rRNA structure together. The combined cluster of proteins S8, S12 and S17 appears to hold together the shoulder and platform of the 30S subunit. The protein is Small ribosomal subunit protein uS12 of Novosphingobium aromaticivorans (strain ATCC 700278 / DSM 12444 / CCUG 56034 / CIP 105152 / NBRC 16084 / F199).